Here is a 946-residue protein sequence, read N- to C-terminus: Bifunctional glutamine synthetase adenylyltransferase/adenylyl-removing enzyme (946 aa).

The segment at 1–440 is adenylyl removase; sequence MKPLSSPLQQ…VFNELIGDDE (440 aa). An adenylyl transferase region spans residues 449-946; the sequence is SEHWRELWQD…ASWQKWLVAG (498 aa).

Belongs to the GlnE family. Requires Mg(2+) as cofactor.

It carries out the reaction [glutamine synthetase]-O(4)-(5'-adenylyl)-L-tyrosine + phosphate = [glutamine synthetase]-L-tyrosine + ADP. The catalysed reaction is [glutamine synthetase]-L-tyrosine + ATP = [glutamine synthetase]-O(4)-(5'-adenylyl)-L-tyrosine + diphosphate. Its function is as follows. Involved in the regulation of glutamine synthetase GlnA, a key enzyme in the process to assimilate ammonia. When cellular nitrogen levels are high, the C-terminal adenylyl transferase (AT) inactivates GlnA by covalent transfer of an adenylyl group from ATP to specific tyrosine residue of GlnA, thus reducing its activity. Conversely, when nitrogen levels are low, the N-terminal adenylyl removase (AR) activates GlnA by removing the adenylyl group by phosphorolysis, increasing its activity. The regulatory region of GlnE binds the signal transduction protein PII (GlnB) which indicates the nitrogen status of the cell. The polypeptide is Bifunctional glutamine synthetase adenylyltransferase/adenylyl-removing enzyme (Citrobacter koseri (strain ATCC BAA-895 / CDC 4225-83 / SGSC4696)).